A 449-amino-acid chain; its full sequence is Glucose-6-phosphate isomerase (449 aa).

E291 serves as the catalytic Proton donor. Active-site residues include H312 and K426.

Belongs to the GPI family.

The protein resides in the cytoplasm. It carries out the reaction alpha-D-glucose 6-phosphate = beta-D-fructose 6-phosphate. The protein operates within carbohydrate biosynthesis; gluconeogenesis. Its pathway is carbohydrate degradation; glycolysis; D-glyceraldehyde 3-phosphate and glycerone phosphate from D-glucose: step 2/4. Catalyzes the reversible isomerization of glucose-6-phosphate to fructose-6-phosphate. The protein is Glucose-6-phosphate isomerase of Streptococcus pneumoniae serotype 4 (strain ATCC BAA-334 / TIGR4).